The chain runs to 147 residues: Large ribosomal subunit protein uL22c (147 aa).

It belongs to the universal ribosomal protein uL22 family. Part of the 50S ribosomal subunit.

It localises to the plastid. Functionally, this protein binds specifically to 23S rRNA. The globular domain of the protein is located near the polypeptide exit tunnel on the outside of the subunit, while an extended beta-hairpin is found that lines the wall of the exit tunnel in the center of the 70S ribosome. The sequence is that of Large ribosomal subunit protein uL22c (rpl22) from Cuscuta gronovii (Common dodder).